The following is a 1698-amino-acid chain: Cullin-7 (1698 aa).

Positions 315–357 are disordered; sequence QASDRPRSSARSPGSIFQPQLADVSPGLPAAQAQPSFRRSRRF. Serine 339 bears the Phosphoserine mark. In terms of domain architecture, CPH spans 360 to 433; that stretch reads RSEFASGNTY…HWHMLEILGF (74 aa). Over residues 601 to 611 the composition is skewed to basic and acidic residues; sequence SEDAAKVEAKE. Positions 601 to 623 are disordered; that stretch reads SEDAAKVEAKEPPSQSPNTPLQR. The DOC domain maps to 814 to 993; sequence PINIPFFDVF…HTRLFYMVRA (180 aa). Residues 1345–1370 form a disordered region; it reads GASGKEHKSEKEEEAGAAAVVDVAEG. Residue lysine 1576 forms a Glycyl lysine isopeptide (Lys-Gly) (interchain with G-Cter in NEDD8) linkage.

This sequence belongs to the cullin family. In terms of assembly, component of the 3M complex, composed of core components CUL7, CCDC8 and OBSL1. Component of the Cul7-RING(FBXW8) complex consisting of CUL7, RBX1, SKP1 and FBXW8. Within the Cul7-RING(FBXW8) complex interacts with FBXW8 and RBX1, but not with SKP1. Interacts with CUL1 (via the C-terminal domain); the interaction seems to be mediated by FBXW8; it is likely specific to FBXW8, but not other F-box proteins. Interacts (via the CPH domain) with p53/TP53; the interaction preferentially involves tetrameric and dimeric p53/TP53; this interaction recruits p53/TP53 for ubiquitination by neddylated CUL1-RBX1. The CUL7-CUL9 heterodimer seems to interact specifically with p53/TP53. Interacts with FBXW8; interaction is mutually exclusive of binding to CUL9 or p53/TP53. Interacts with CUL9; leading to inhibited CUL9 activity. Interacts with OBSL1. Interacts (as part of the 3M complex) with HDAC4 and HDAC5; it is negatively regulated by ANKRA2. (Microbial infection) Interacts with SV40 Large T antigen; this interaction seems to inhibit CUL7. Post-translationally, according to a report, may not be neddylated despite the conserved consensus site for neddylation at Lys-1576. Structural study of the Cul7-RING(FBXW8) reveals that both CUL7 and RBX1 are in orientations that are incompatible with neddylation. Highly expressed in fetal kidney and adult skeletal muscle. Also abundant in fetal brain, as well as in adult pancreas, kidney, placenta and heart. Detected in trophoblasts, lymphoblasts, osteoblasts, chondrocytes and skin fibroblasts.

The protein localises to the cytoplasm. It is found in the cytoskeleton. It localises to the microtubule organizing center. The protein resides in the centrosome. Its subcellular location is the perinuclear region. The protein localises to the golgi apparatus. It functions in the pathway protein modification; protein ubiquitination. Core component of the 3M and Cul7-RING(FBXW8) complexes, which mediate the ubiquitination and subsequent proteasomal degradation of target proteins. Core component of the 3M complex, a complex required to regulate microtubule dynamics and genome integrity. It is unclear how the 3M complex regulates microtubules, it could act by controlling the level of a microtubule stabilizer. The Cul7-RING(FBXW8) complex alone lacks ubiquitination activity and does not promote polyubiquitination and proteasomal degradation of p53/TP53. However it mediates recruitment of p53/TP53 for ubiquitination by neddylated CUL1-RBX1. Interaction with CUL9 is required to inhibit CUL9 activity and ubiquitination of BIRC5. The Cul7-RING(FBXW8) complex also mediates ubiquitination and consequent degradation of target proteins such as GORASP1, IRS1 and MAP4K1/HPK1. Ubiquitination of GORASP1 regulates Golgi morphogenesis and dendrite patterning in brain. Mediates ubiquitination and degradation of IRS1 in a mTOR-dependent manner: the Cul7-RING(FBXW8) complex recognizes and binds IRS1 previously phosphorylated by S6 kinase (RPS6KB1 or RPS6KB2). The Cul7-RING(FBXW8) complex also mediates ubiquitination of MAP4K1/HPK1: recognizes and binds autophosphorylated MAP4K1/HPK1, leading to its degradation, thereby affecting cell proliferation and differentiation. Acts as a regulator in trophoblast cell epithelial-mesenchymal transition and placental development. While the Cul7-RING(FBXW8) and the 3M complexes are associated and involved in common processes, CUL7 and the Cul7-RING(FBXW8) complex may have additional functions. Probably plays a role in the degradation of proteins involved in endothelial proliferation and/or differentiation. In Homo sapiens (Human), this protein is Cullin-7 (CUL7).